A 66-amino-acid polypeptide reads, in one-letter code: Large ribosomal subunit protein uL29 (66 aa).

This sequence belongs to the universal ribosomal protein uL29 family.

The sequence is that of Large ribosomal subunit protein uL29 from Thermotoga neapolitana (strain ATCC 49049 / DSM 4359 / NBRC 107923 / NS-E).